The following is a 50-amino-acid chain: Protein PsbN (50 aa).

A helical membrane pass occupies residues 14–34 (VAVTILAVLLALTGFGLWTAF).

This sequence belongs to the PsbN family.

The protein localises to the cellular thylakoid membrane. May play a role in photosystem I and II biogenesis. This is Protein PsbN from Prochlorococcus marinus (strain MIT 9515).